A 250-amino-acid chain; its full sequence is 4-hydroxy-tetrahydrodipicolinate reductase (250 aa).

NAD(+) contacts are provided by residues 10 to 15, 78 to 80, and 105 to 108; these read GVKGRI, GTT, and APNF. His135 acts as the Proton donor/acceptor in catalysis. His136 provides a ligand contact to (S)-2,3,4,5-tetrahydrodipicolinate. The Proton donor role is filled by Lys139. 145–146 provides a ligand contact to (S)-2,3,4,5-tetrahydrodipicolinate; that stretch reads GT.

This sequence belongs to the DapB family.

The protein localises to the cytoplasm. The catalysed reaction is (S)-2,3,4,5-tetrahydrodipicolinate + NAD(+) + H2O = (2S,4S)-4-hydroxy-2,3,4,5-tetrahydrodipicolinate + NADH + H(+). It carries out the reaction (S)-2,3,4,5-tetrahydrodipicolinate + NADP(+) + H2O = (2S,4S)-4-hydroxy-2,3,4,5-tetrahydrodipicolinate + NADPH + H(+). It functions in the pathway amino-acid biosynthesis; L-lysine biosynthesis via DAP pathway; (S)-tetrahydrodipicolinate from L-aspartate: step 4/4. Catalyzes the conversion of 4-hydroxy-tetrahydrodipicolinate (HTPA) to tetrahydrodipicolinate. In Streptomyces avermitilis (strain ATCC 31267 / DSM 46492 / JCM 5070 / NBRC 14893 / NCIMB 12804 / NRRL 8165 / MA-4680), this protein is 4-hydroxy-tetrahydrodipicolinate reductase.